We begin with the raw amino-acid sequence, 360 residues long: Alpha-ketoglutarate dependent kainoid synthase (360 aa).

A Fe2OG dioxygenase domain is found at 200-310; that stretch reads MFFSNRIYPE…RASLISFYEP (111 aa). Residues histidine 225, aspartate 227, and histidine 286 each contribute to the Fe cation site. Position 301 (arginine 301) interacts with 2-oxoglutarate.

The protein belongs to the iron/ascorbate-dependent oxidoreductase family. Fe(2+) is required as a cofactor.

It catalyses the reaction prekainate + 2-oxoglutarate + O2 = kainate + succinate + CO2 + H2O. It carries out the reaction prekainate + 2-oxoglutarate + O2 + H(+) = kainate lactone + succinate + CO2 + H2O. Its pathway is secondary metabolite biosynthesis. Its activity is regulated as follows. Inhibited by the iron chelator EDTA. In terms of biological role, iron/ascorbate-dependent oxidoreductase: part of the gene cluster that mediates the biosynthesis of kainic acid (KA) and derivatives, natural products with neurochemical activity acting as ionotropic glutamate receptor (iGluR) agonists, thus being neurotoxins. Catalyzes the conversion of prekainic acid to kainic acid and kainic acid lactone. This chain is Alpha-ketoglutarate dependent kainoid synthase, found in Digenea simplex (Marine red alga).